Consider the following 305-residue polypeptide: GMP synthase [glutamine-hydrolyzing] subunit B (305 aa).

The 184-residue stretch at 2 to 185 (VNVDEFIEEA…LDLEEIISER (184 aa)) folds into the GMPS ATP-PPase domain. 29–35 (SGGVDSS) provides a ligand contact to ATP.

As to quaternary structure, heterodimer composed of a glutamine amidotransferase subunit (A) and a GMP-binding subunit (B).

The catalysed reaction is XMP + L-glutamine + ATP + H2O = GMP + L-glutamate + AMP + diphosphate + 2 H(+). It functions in the pathway purine metabolism; GMP biosynthesis; GMP from XMP (L-Gln route): step 1/1. Functionally, catalyzes the synthesis of GMP from XMP. The polypeptide is GMP synthase [glutamine-hydrolyzing] subunit B (Haloarcula marismortui (strain ATCC 43049 / DSM 3752 / JCM 8966 / VKM B-1809) (Halobacterium marismortui)).